The sequence spans 753 residues: Subtilisin-like protease SBT3.17 (753 aa).

Residues 1–29 (MGNSFLIADTSSLVIGLLLILNGVFISAA) form the signal peptide. The propeptide at 30–116 (KHYGLNKIHI…VVPSRVMRLK (87 aa)) is activation peptide. Residues 38 to 115 (HIVHLGAKQH…RVVPSRVMRL (78 aa)) enclose the Inhibitor I9 domain. Asn97 carries an N-linked (GlcNAc...) asparagine glycan. In terms of domain architecture, Peptidase S8 spans 120–603 (TFDYLGLLPT…GGLINPEKVT (484 aa)). Asp150 acts as the Charge relay system in catalysis. A glycan (N-linked (GlcNAc...) asparagine) is linked at Asn161. His227 functions as the Charge relay system in the catalytic mechanism. The N-linked (GlcNAc...) asparagine glycan is linked to Asn369. The Charge relay system role is filled by Ser534. N-linked (GlcNAc...) asparagine glycosylation is found at Asn639, Asn704, and Asn737.

It belongs to the peptidase S8 family.

The protein localises to the secreted. This chain is Subtilisin-like protease SBT3.17, found in Arabidopsis thaliana (Mouse-ear cress).